We begin with the raw amino-acid sequence, 204 residues long: Probable nicotinate-nucleotide adenylyltransferase (204 aa).

Belongs to the NadD family.

It carries out the reaction nicotinate beta-D-ribonucleotide + ATP + H(+) = deamido-NAD(+) + diphosphate. The protein operates within cofactor biosynthesis; NAD(+) biosynthesis; deamido-NAD(+) from nicotinate D-ribonucleotide: step 1/1. Functionally, catalyzes the reversible adenylation of nicotinate mononucleotide (NaMN) to nicotinic acid adenine dinucleotide (NaAD). The sequence is that of Probable nicotinate-nucleotide adenylyltransferase from Mycolicibacterium gilvum (strain PYR-GCK) (Mycobacterium gilvum (strain PYR-GCK)).